Here is a 328-residue protein sequence, read N- to C-terminus: Serine/threonine-protein phosphatase PP2A-2 catalytic subunit (328 aa).

Residues Asp-76, His-78, Asp-104, and Asn-136 each coordinate Mn(2+). The Proton donor role is filled by His-137. 2 residues coordinate Mn(2+): His-186 and His-260. Leu-328 is modified (leucine methyl ester).

This sequence belongs to the PPP phosphatase family. PP-2A subfamily. The cofactor is Mn(2+).

The enzyme catalyses O-phospho-L-seryl-[protein] + H2O = L-seryl-[protein] + phosphate. It catalyses the reaction O-phospho-L-threonyl-[protein] + H2O = L-threonyl-[protein] + phosphate. The polypeptide is Serine/threonine-protein phosphatase PP2A-2 catalytic subunit (PP2A-2) (Blumeria hordei (Barley powdery mildew)).